The primary structure comprises 138 residues: Endoribonuclease YbeY (138 aa).

3 residues coordinate Zn(2+): His-98, His-102, and His-108.

The protein belongs to the endoribonuclease YbeY family. Requires Zn(2+) as cofactor.

The protein localises to the cytoplasm. Functionally, single strand-specific metallo-endoribonuclease involved in late-stage 70S ribosome quality control and in maturation of the 3' terminus of the 16S rRNA. The polypeptide is Endoribonuclease YbeY (Thermosipho melanesiensis (strain DSM 12029 / CIP 104789 / BI429)).